A 175-amino-acid chain; its full sequence is Large ribosomal subunit protein uL10 (175 aa).

This sequence belongs to the universal ribosomal protein uL10 family. In terms of assembly, part of the ribosomal stalk of the 50S ribosomal subunit. The N-terminus interacts with L11 and the large rRNA to form the base of the stalk. The C-terminus forms an elongated spine to which L12 dimers bind in a sequential fashion forming a multimeric L10(L12)X complex.

In terms of biological role, forms part of the ribosomal stalk, playing a central role in the interaction of the ribosome with GTP-bound translation factors. The chain is Large ribosomal subunit protein uL10 from Cupriavidus taiwanensis (strain DSM 17343 / BCRC 17206 / CCUG 44338 / CIP 107171 / LMG 19424 / R1) (Ralstonia taiwanensis (strain LMG 19424)).